The sequence spans 477 residues: UDP-N-acetylmuramate--L-alanine ligase (477 aa).

112–118 (GAHGKTT) serves as a coordination point for ATP.

It belongs to the MurCDEF family.

The protein localises to the cytoplasm. It catalyses the reaction UDP-N-acetyl-alpha-D-muramate + L-alanine + ATP = UDP-N-acetyl-alpha-D-muramoyl-L-alanine + ADP + phosphate + H(+). It participates in cell wall biogenesis; peptidoglycan biosynthesis. Its function is as follows. Cell wall formation. The sequence is that of UDP-N-acetylmuramate--L-alanine ligase from Acidovorax ebreus (strain TPSY) (Diaphorobacter sp. (strain TPSY)).